The primary structure comprises 470 residues: MNRHISEILEKYLGRIPSLTEYHTLKSQYKNIHRVNIFNKDIFISLIKKNKKKFFSDIDTSVSEIKKLVFDYFTKQEQTYSIGKLYTIIELQTILVTTYTDILGVLTTKGPDIFSSNVQYNTSSMQKIANDALNSMNIATISDKVMGRHNVSSLVCNVNSLMEEYLRRHNKSCICYGSYSLHLLNPEIKYGDIDILQTNSRTFLIDLAFLIKFITGYNVILLKVPYLKNYMVLKDQNDSHIIDSFNIRQETMQHIPKILIDNIYIVDPTIQLLSMLKMLSQIDRLEDLAKNPDKLTIRFATLLEYVRNKYGIILNGNSNNMPMPSTIDIKKRIITVDTKYYNFAYDKCYVYLDENSLSSDILSLNADDAVDFENVSNSAFLVNDKTLYTYFSNTILLSGNDKIHEISSRGISAHILIYQALMKYDISIPLTDIVNSLIGRNKQPIYEIIPRDKKTGKHGIIDIEKDIITH.

Residues D192 and D194 contribute to the active site.

Belongs to the poxviridae poly(A) polymerase catalytic subunit family. Heterodimer of a large (catalytic) subunit and a small (regulatory) subunit.

The enzyme catalyses RNA(n) + ATP = RNA(n)-3'-adenine ribonucleotide + diphosphate. Polymerase that creates the 3'-poly(A) tail of mRNA's. The chain is Poly(A) polymerase catalytic subunit (PAPL) from Deerpox virus (strain Mule deer/United States/W-848-83/1983) (DPV).